Reading from the N-terminus, the 242-residue chain is 3-dehydroquinate dehydratase (242 aa).

3-dehydroquinate contacts are provided by residues 39–41 (EVR) and arginine 73. Histidine 135 (proton donor/acceptor) is an active-site residue. The active-site Schiff-base intermediate with substrate is lysine 162. 3-dehydroquinate contacts are provided by arginine 203 and glutamine 228.

It belongs to the type-I 3-dehydroquinase family. In terms of assembly, homodimer.

It catalyses the reaction 3-dehydroquinate = 3-dehydroshikimate + H2O. The protein operates within metabolic intermediate biosynthesis; chorismate biosynthesis; chorismate from D-erythrose 4-phosphate and phosphoenolpyruvate: step 3/7. Functionally, involved in the third step of the chorismate pathway, which leads to the biosynthesis of aromatic amino acids. Catalyzes the cis-dehydration of 3-dehydroquinate (DHQ) and introduces the first double bond of the aromatic ring to yield 3-dehydroshikimate. The polypeptide is 3-dehydroquinate dehydratase (Methanosarcina acetivorans (strain ATCC 35395 / DSM 2834 / JCM 12185 / C2A)).